Here is a 351-residue protein sequence, read N- to C-terminus: DNA polymerase IV (351 aa).

Positions 4-185 (IIHVDMDCFF…LPLAKIPGVG (182 aa)) constitute a UmuC domain. Mg(2+) is bound by residues D8 and D103. E104 is a catalytic residue.

The protein belongs to the DNA polymerase type-Y family. Monomer. The cofactor is Mg(2+).

Its subcellular location is the cytoplasm. It carries out the reaction DNA(n) + a 2'-deoxyribonucleoside 5'-triphosphate = DNA(n+1) + diphosphate. Its function is as follows. Poorly processive, error-prone DNA polymerase involved in untargeted mutagenesis. Copies undamaged DNA at stalled replication forks, which arise in vivo from mismatched or misaligned primer ends. These misaligned primers can be extended by PolIV. Exhibits no 3'-5' exonuclease (proofreading) activity. May be involved in translesional synthesis, in conjunction with the beta clamp from PolIII. In Shigella dysenteriae serotype 1 (strain Sd197), this protein is DNA polymerase IV.